The chain runs to 528 residues: 4-nitrophenol 4-monooxygenase/4-nitrocatechol 2-monooxygenase, oxygenase component (528 aa).

Position 100–104 (100–104) interacts with substrate; the sequence is RPPAG. FAD contacts are provided by residues 153-155, 159-162, and Thr194; these read PMF and QFDR. 205 to 206 serves as a coordination point for substrate; sequence GN. Residue 461–464 coordinates FAD; it reads TMQR.

It belongs to the FADH(2)-utilizing monooxygenase family. The 4-NP/4-NCA monooxygenase is composed of an oxygenase component NpcA and a reductase component NpcB. It depends on FAD as a cofactor.

It catalyses the reaction 4-nitrophenol + NADH + O2 + H(+) = 4-nitrocatechol + NAD(+) + H2O. It carries out the reaction 4-nitrocatechol + NADPH + O2 = 2-hydroxy-1,4-benzoquinone + nitrite + NADP(+) + H2O. The enzyme catalyses 4-nitrocatechol + NADH + O2 = 2-hydroxy-1,4-benzoquinone + nitrite + NAD(+) + H2O. It participates in aromatic compound metabolism. Its pathway is xenobiotic degradation. Its activity is regulated as follows. Inhibited by methimazole. Functionally, involved in the degradation of para-nitrophenol (4-NP). Catalyzes both the initial hydroxylation of 4-NP to produce 4-nitrocatechol (4-NCA) and the subsequent oxidative release of the nitro group from 4-NCA to produce 2-hydroxy-1,4-benzoquinone. It can also use 4-nitroresorcinol as substrate with a rate of nitrite release similar to that observed with the two physiological substrates, 4-PN and 4-NCA. This chain is 4-nitrophenol 4-monooxygenase/4-nitrocatechol 2-monooxygenase, oxygenase component (npcA), found in Rhodococcus opacus (Nocardia opaca).